Consider the following 422-residue polypeptide: Tryptophan synthase beta chain (422 aa).

Position 111 is an N6-(pyridoxal phosphate)lysine (Lys111).

This sequence belongs to the TrpB family. In terms of assembly, tetramer of two alpha and two beta chains. The cofactor is pyridoxal 5'-phosphate.

The enzyme catalyses (1S,2R)-1-C-(indol-3-yl)glycerol 3-phosphate + L-serine = D-glyceraldehyde 3-phosphate + L-tryptophan + H2O. Its pathway is amino-acid biosynthesis; L-tryptophan biosynthesis; L-tryptophan from chorismate: step 5/5. In terms of biological role, the beta subunit is responsible for the synthesis of L-tryptophan from indole and L-serine. The sequence is that of Tryptophan synthase beta chain from Pseudothermotoga lettingae (strain ATCC BAA-301 / DSM 14385 / NBRC 107922 / TMO) (Thermotoga lettingae).